The primary structure comprises 343 residues: Methylthioribose-1-phosphate isomerase (343 aa).

Substrate-binding positions include 48-50, arginine 88, and glutamine 193; that span reads RGA. Catalysis depends on aspartate 234, which acts as the Proton donor. Residue 244 to 245 participates in substrate binding; that stretch reads NK.

The protein belongs to the eIF-2B alpha/beta/delta subunits family. MtnA subfamily.

The enzyme catalyses 5-(methylsulfanyl)-alpha-D-ribose 1-phosphate = 5-(methylsulfanyl)-D-ribulose 1-phosphate. It participates in amino-acid biosynthesis; L-methionine biosynthesis via salvage pathway; L-methionine from S-methyl-5-thio-alpha-D-ribose 1-phosphate: step 1/6. In terms of biological role, catalyzes the interconversion of methylthioribose-1-phosphate (MTR-1-P) into methylthioribulose-1-phosphate (MTRu-1-P). The polypeptide is Methylthioribose-1-phosphate isomerase (Thermotoga petrophila (strain ATCC BAA-488 / DSM 13995 / JCM 10881 / RKU-1)).